We begin with the raw amino-acid sequence, 939 residues long: Translation initiation factor IF-2 (939 aa).

Disordered stretches follow at residues 51–81 (LGTK…GGKK) and 137–353 (VTNK…EMKA). Residues 181-210 (NEKKAGAPEIKRAEHTETVEKSKTAVDSKK) show a composition bias toward basic and acidic residues. The segment covering 259-277 (PVNRSPRPSTPSPNRSAGG) has biased composition (low complexity). The segment covering 300–312 (RRDEKPAERDSRP) has biased composition (basic and acidic residues). The 170-residue stretch at 437–606 (GRCPVVTVMG…QLAAEMLELK (170 aa)) folds into the tr-type G domain. Residues 446 to 453 (GHVDHGKT) are G1. 446-453 (GHVDHGKT) is a GTP binding site. Residues 471 to 475 (GITQH) form a G2 region. Residues 492 to 495 (DTPG) form a G3 region. GTP-binding positions include 492-496 (DTPGH) and 546-549 (NKID). Positions 546 to 549 (NKID) are G4. Residues 582-584 (SAK) form a G5 region.

Belongs to the TRAFAC class translation factor GTPase superfamily. Classic translation factor GTPase family. IF-2 subfamily.

Its subcellular location is the cytoplasm. In terms of biological role, one of the essential components for the initiation of protein synthesis. Protects formylmethionyl-tRNA from spontaneous hydrolysis and promotes its binding to the 30S ribosomal subunits. Also involved in the hydrolysis of GTP during the formation of the 70S ribosomal complex. This is Translation initiation factor IF-2 from Desulfotalea psychrophila (strain LSv54 / DSM 12343).